Consider the following 503-residue polypeptide: Probable cytosol aminopeptidase (503 aa).

Residues K270 and D275 each contribute to the Mn(2+) site. K282 is an active-site residue. D293, D352, and E354 together coordinate Mn(2+). R356 is an active-site residue.

The protein belongs to the peptidase M17 family. The cofactor is Mn(2+).

It is found in the cytoplasm. The enzyme catalyses Release of an N-terminal amino acid, Xaa-|-Yaa-, in which Xaa is preferably Leu, but may be other amino acids including Pro although not Arg or Lys, and Yaa may be Pro. Amino acid amides and methyl esters are also readily hydrolyzed, but rates on arylamides are exceedingly low.. The catalysed reaction is Release of an N-terminal amino acid, preferentially leucine, but not glutamic or aspartic acids.. In terms of biological role, presumably involved in the processing and regular turnover of intracellular proteins. Catalyzes the removal of unsubstituted N-terminal amino acids from various peptides. This chain is Probable cytosol aminopeptidase, found in Sodalis glossinidius (strain morsitans).